The primary structure comprises 309 residues: NAD kinase (309 aa).

The Proton acceptor role is filled by D89. Residues D89–G90, N163–E164, H174, R191, D193, and T204–S209 contribute to the NAD(+) site.

This sequence belongs to the NAD kinase family. It depends on a divalent metal cation as a cofactor.

It localises to the cytoplasm. It carries out the reaction NAD(+) + ATP = ADP + NADP(+) + H(+). Functionally, involved in the regulation of the intracellular balance of NAD and NADP, and is a key enzyme in the biosynthesis of NADP. Catalyzes specifically the phosphorylation on 2'-hydroxyl of the adenosine moiety of NAD to yield NADP. The sequence is that of NAD kinase from Shewanella denitrificans (strain OS217 / ATCC BAA-1090 / DSM 15013).